The following is a 302-amino-acid chain: Beta-casein (302 aa).

The N-terminal stretch at 1 to 15 is a signal peptide; the sequence is MKLLILTCLVALGFA. 2 positions are modified to phosphoserine: serine 23 and serine 25. Repeat copies occupy residues 144–151, 152–159, 160–167, 168–175, 176–182, 183–190, 191–198, 199–204, 205–214, 215–222, 223–230, 231–238, 241–247, 248–255, 256–262, and 263–269. The interval 144-269 is 16 X approximate tandem repeats; the sequence is KREMLPIYER…LLPEEILPVN (126 aa).

It belongs to the beta-casein family. As to expression, mammary gland specific. Secreted in milk.

The protein resides in the secreted. In terms of biological role, important role in determination of the surface properties of the casein micelles. This is Beta-casein (CSN2) from Notamacropus eugenii (Tammar wallaby).